The chain runs to 218 residues: Small ribosomal subunit protein uS3c (218 aa).

A KH type-2 domain is found at 47–118; sequence VQKNLKISSG…KLNITITRIA (72 aa).

This sequence belongs to the universal ribosomal protein uS3 family. Part of the 30S ribosomal subunit.

It localises to the plastid. The protein localises to the chloroplast. The sequence is that of Small ribosomal subunit protein uS3c (rps3) from Daucus carota (Wild carrot).